The chain runs to 502 residues: Putative diacyglycerol O-acyltransferase MT1809 (502 aa).

The active-site Proton acceptor is the histidine 174.

This sequence belongs to the long-chain O-acyltransferase family.

The enzyme catalyses an acyl-CoA + a 1,2-diacyl-sn-glycerol = a triacyl-sn-glycerol + CoA. It participates in glycerolipid metabolism; triacylglycerol biosynthesis. The polypeptide is Putative diacyglycerol O-acyltransferase MT1809 (Mycobacterium tuberculosis (strain CDC 1551 / Oshkosh)).